Consider the following 187-residue polypeptide: Oligoribonuclease (187 aa).

Residues 7–170 (LCWLDMEMTG…DDILESIEEM (164 aa)) form the Exonuclease domain. Y128 is an active-site residue.

This sequence belongs to the oligoribonuclease family.

It is found in the cytoplasm. Its function is as follows. 3'-to-5' exoribonuclease specific for small oligoribonucleotides. The polypeptide is Oligoribonuclease (Neisseria meningitidis serogroup C / serotype 2a (strain ATCC 700532 / DSM 15464 / FAM18)).